We begin with the raw amino-acid sequence, 327 residues long: MRPPGFWTRPPTHPLARLLAPVGRVYGGLTADRMDRPGAEPPYPVLCVGNFTLGGAGKTPTALALVRLLRDLGRTPALLSRGYGGRLAGPLVVDPARHAAAEVGDEPLLLAQAAPTIVARDRPSGARLCAASGADVIVMDDGLQNPSLTKSLSLAVVDGGVGLGNGLPFPAGPLRAPLARQWPHVAGLVLVGEGSPGEAMAAEAESRGLPVHRARLVPEAGSDWAGRRVVAFAGIGRPQKFFETLRSLGAEIVAEWAFPDHHPYRPGDWTALSALAAREGASLVTTEKDAVRLPAEARTAVAVLRVALAFADETRLRQQLAAAFPRA.

52-59 (TLGGAGKT) serves as a coordination point for ATP.

This sequence belongs to the LpxK family.

The catalysed reaction is a lipid A disaccharide + ATP = a lipid IVA + ADP + H(+). Its pathway is glycolipid biosynthesis; lipid IV(A) biosynthesis; lipid IV(A) from (3R)-3-hydroxytetradecanoyl-[acyl-carrier-protein] and UDP-N-acetyl-alpha-D-glucosamine: step 6/6. Its function is as follows. Transfers the gamma-phosphate of ATP to the 4'-position of a tetraacyldisaccharide 1-phosphate intermediate (termed DS-1-P) to form tetraacyldisaccharide 1,4'-bis-phosphate (lipid IVA). In Methylorubrum extorquens (strain CM4 / NCIMB 13688) (Methylobacterium extorquens), this protein is Tetraacyldisaccharide 4'-kinase.